A 143-amino-acid chain; its full sequence is Transcriptional regulator MraZ (143 aa).

SpoVT-AbrB domains lie at 5 to 47 (TYTP…PRAA) and 76 to 119 (TDEQ…DAQA).

It belongs to the MraZ family. In terms of assembly, forms oligomers.

Its subcellular location is the cytoplasm. It is found in the nucleoid. This Mycobacterium bovis (strain ATCC BAA-935 / AF2122/97) protein is Transcriptional regulator MraZ.